The sequence spans 574 residues: MATTELPKFELLSLADNTSGWGPLTTSSSSVEPVPFQQFNKADRIGRVADWIGVDRFFRRGNERYNERVYGSAANAGSQFDYIHGMDEHNFQLVDTSKPMARNPQRNFRVRQMHLRKMMQKEVEKREMVNQTTNLRMKRSIAKEQQRAFKMWQRRGGNARQGQRGQGGRFGGDRPKERLPSVQVRPEWGVLEEMNLSAFSKLALPNIPGGEDIGDHQYGSLQYYDKTVDRVSVKNSVPLQRCAGVYYNVTTTEDPVIQELAQGGVGNVFGTDIILATLMTAPRSVYSWDIVAYRIGDKLFFDKRNTKDILNPVETLTVSETSAEPPSFDGNGLNNARDLATEAFYINQNFRRQVVKRNEPGFTFKNVRVPFEDEETGDATGTAYKYRKWNLGNGVDGKPVELVCRTELDGVIHGLGNETQTLTIKAFNEWDSSQAGGVDWRTKLDVQKGAVMATEIKNNSAKVAKWTLQALLAGSDTMKLGYVSRNNARSTQNHSILNTQYVKPTEFASNIALNMDNCWGILRCVIDSCMKQKPGKYLLMKDPQSPVIRLYSLPEGTFDSERESSEEENSDDDQ.

Residues 153–178 are disordered; that stretch reads QRRGGNARQGQRGQGGRFGGDRPKER. Over residues 154–163 the composition is skewed to low complexity; sequence RRGGNARQGQ. Residues 312 to 326 are RNA gate; the sequence is PVETLTVSETSAEPP. A disordered region spans residues 555–574; that stretch reads EGTFDSERESSEEENSDDDQ. The segment covering 564–574 has biased composition (acidic residues); it reads SSEEENSDDDQ.

This sequence belongs to the eIF-3 subunit D family. In terms of assembly, component of the eukaryotic translation initiation factor 3 (eIF-3) complex.

The protein localises to the cytoplasm. In terms of biological role, mRNA cap-binding component of the eukaryotic translation initiation factor 3 (eIF-3) complex, which is involved in protein synthesis of a specialized repertoire of mRNAs and, together with other initiation factors, stimulates binding of mRNA and methionyl-tRNAi to the 40S ribosome. The eIF-3 complex specifically targets and initiates translation of a subset of mRNAs involved in cell proliferation. In the eIF-3 complex, eif3d specifically recognizes and binds the 7-methylguanosine cap of a subset of mRNAs. This Caenorhabditis briggsae protein is Eukaryotic translation initiation factor 3 subunit D.